A 510-amino-acid polypeptide reads, in one-letter code: Chromosomal replication initiator protein DnaA (510 aa).

Residues 1–107 (MTNDPGSGFA…VRIAPPPADD (107 aa)) form a domain I, interacts with DnaA modulators region. The tract at residues 107 to 169 (DDDDSVAAAV…ADTSASADGT (63 aa)) is domain II. The tract at residues 119–168 (PGLEASPETSQEVSDEIDDFGENAPKSRQSWPTHFKKRSTDADTSASADG) is disordered. The interval 170–386 (SLNRRYTFDT…GALIRVTAFA (217 aa)) is domain III, AAA+ region. ATP contacts are provided by Gly214, Gly216, Lys217, and Thr218. The segment at 387-510 (SLNKTPIDKA…TTRIRQRSKR (124 aa)) is domain IV, binds dsDNA.

Belongs to the DnaA family. Oligomerizes as a right-handed, spiral filament on DNA at oriC.

It localises to the cytoplasm. In terms of biological role, plays an essential role in the initiation and regulation of chromosomal replication. ATP-DnaA binds to the origin of replication (oriC) to initiate formation of the DNA replication initiation complex once per cell cycle. Binds the DnaA box (a 9 base pair repeat at the origin) and separates the double-stranded (ds)DNA. Forms a right-handed helical filament on oriC DNA; dsDNA binds to the exterior of the filament while single-stranded (ss)DNA is stabiized in the filament's interior. The ATP-DnaA-oriC complex binds and stabilizes one strand of the AT-rich DNA unwinding element (DUE), permitting loading of DNA polymerase. After initiation quickly degrades to an ADP-DnaA complex that is not apt for DNA replication. Binds acidic phospholipids. This chain is Chromosomal replication initiator protein DnaA, found in Mycobacterium ulcerans (strain Agy99).